The chain runs to 200 residues: Histone chaperone asf1b (200 aa).

Belongs to the ASF1 family. As to quaternary structure, interacts with histone H3 and histone H4.

Its subcellular location is the nucleus. Functionally, histone chaperone that facilitates histone deposition and histone exchange and removal during nucleosome assembly and disassembly. The polypeptide is Histone chaperone asf1b (asf1b) (Xenopus tropicalis (Western clawed frog)).